We begin with the raw amino-acid sequence, 74 residues long: Small ribosomal subunit protein eS17 (74 aa).

This sequence belongs to the eukaryotic ribosomal protein eS17 family.

The sequence is that of Small ribosomal subunit protein eS17 from Ignicoccus hospitalis (strain KIN4/I / DSM 18386 / JCM 14125).